The following is a 562-amino-acid chain: Probable Xaa-Pro aminopeptidase PEPP (562 aa).

Mn(2+)-binding residues include Asp358, Asp369, Glu492, and Glu532.

Belongs to the peptidase M24B family. Mn(2+) serves as cofactor.

It catalyses the reaction Release of any N-terminal amino acid, including proline, that is linked to proline, even from a dipeptide or tripeptide.. Functionally, catalyzes the removal of a penultimate prolyl residue from the N-termini of peptides. The chain is Probable Xaa-Pro aminopeptidase PEPP (PEPP) from Leptosphaeria maculans (strain JN3 / isolate v23.1.3 / race Av1-4-5-6-7-8) (Blackleg fungus).